A 158-amino-acid chain; its full sequence is Ribosome maturation factor RimP (158 aa).

The protein belongs to the RimP family.

Its subcellular location is the cytoplasm. Functionally, required for maturation of 30S ribosomal subunits. This chain is Ribosome maturation factor RimP, found in Aquifex aeolicus (strain VF5).